The chain runs to 90 residues: MSVKIRMRRMGSKRKPFYRIVVADSRMPRDGRFIEEVGYYNPLTNPDEVKLEEDKIFEWLEKGAQPSDTVRSLLSKAGLMTRYHDAKYGK.

This sequence belongs to the bacterial ribosomal protein bS16 family.

The sequence is that of Small ribosomal subunit protein bS16 from Lactobacillus gasseri (strain ATCC 33323 / DSM 20243 / BCRC 14619 / CIP 102991 / JCM 1131 / KCTC 3163 / NCIMB 11718 / NCTC 13722 / AM63).